The primary structure comprises 195 residues: 7-methyl-GTP pyrophosphatase (195 aa).

Catalysis depends on aspartate 70, which acts as the Proton acceptor.

It belongs to the Maf family. YceF subfamily. A divalent metal cation is required as a cofactor.

It localises to the cytoplasm. It carries out the reaction N(7)-methyl-GTP + H2O = N(7)-methyl-GMP + diphosphate + H(+). Nucleoside triphosphate pyrophosphatase that hydrolyzes 7-methyl-GTP (m(7)GTP). May have a dual role in cell division arrest and in preventing the incorporation of modified nucleotides into cellular nucleic acids. The protein is 7-methyl-GTP pyrophosphatase of Shewanella sp. (strain MR-4).